The primary structure comprises 102 residues: RNA-binding protein Hfq (102 aa).

Positions 9-68 (DPFLNALRRERVPVSIYLVNGIKLQGQIESFDQFVILLKNTVSQMVYKHAISTVVPSRPV) constitute a Sm domain. The interval 63–102 (VPSRPVSHHSNNAGGGTSNNYHHGSNAQGSGAQQDSEETE) is disordered. Positions 70-96 (HHSNNAGGGTSNNYHHGSNAQGSGAQQ) are enriched in polar residues.

Belongs to the Hfq family. Homohexamer.

In terms of biological role, RNA chaperone that binds small regulatory RNA (sRNAs) and mRNAs to facilitate mRNA translational regulation in response to envelope stress, environmental stress and changes in metabolite concentrations. Also binds with high specificity to tRNAs. The chain is RNA-binding protein Hfq from Salmonella arizonae (strain ATCC BAA-731 / CDC346-86 / RSK2980).